The following is a 359-amino-acid chain: Fructose-bisphosphate aldolase 1 (359 aa).

Ser-50 contributes to the D-glyceraldehyde 3-phosphate binding site. Catalysis depends on Asp-83, which acts as the Proton donor. Zn(2+) contacts are provided by His-84, Asp-105, Glu-142, and His-198. Position 199 (Gly-199) interacts with dihydroxyacetone phosphate. His-232 contributes to the Zn(2+) binding site. Residues 233 to 235 (GSS) and 275 to 278 (NIDT) each bind dihydroxyacetone phosphate.

The protein belongs to the class II fructose-bisphosphate aldolase family. In terms of assembly, homodimer. Requires Zn(2+) as cofactor.

It catalyses the reaction beta-D-fructose 1,6-bisphosphate = D-glyceraldehyde 3-phosphate + dihydroxyacetone phosphate. The protein operates within carbohydrate biosynthesis; Calvin cycle. It functions in the pathway carbohydrate degradation; glycolysis; D-glyceraldehyde 3-phosphate and glycerone phosphate from D-glucose: step 4/4. Its function is as follows. Catalyzes the aldol condensation of dihydroxyacetone phosphate (DHAP or glycerone-phosphate) with glyceraldehyde 3-phosphate (G3P) to form fructose 1,6-bisphosphate (FBP) in gluconeogenesis and the reverse reaction in glycolysis. This is Fructose-bisphosphate aldolase 1 (cfxA) from Cereibacter sphaeroides (Rhodobacter sphaeroides).